Here is a 343-residue protein sequence, read N- to C-terminus: Anthranilate 1,2-dioxygenase electron transfer component (343 aa).

The 2Fe-2S ferredoxin-type domain maps to 3–96; the sequence is HSVALNFADG…NAAFYFDHHS (94 aa). Positions 40, 45, 48, and 80 each coordinate [2Fe-2S] cluster. A ferredoxin-reductase region spans residues 98–338; it reads ICNAGETLKI…HIYSEKFLQS (241 aa). The 104-residue stretch at 103–206 folds into the FAD-binding FR-type domain; it reads ETLKIATVVT…EAPLGSFYLR (104 aa).

The protein belongs to the bacterial ring-hydroxylating dioxygenase ferredoxin reductase family. Monomer. It is part of the anthranilate dioxygenase two component enzyme system. The other component is an oxygenase component consisting of 3 large (AntA) and 3 small (AntB) subunits. The cofactor is FAD. Requires [2Fe-2S] cluster as cofactor.

The catalysed reaction is 2 reduced [2Fe-2S]-[ferredoxin] + NAD(+) + H(+) = 2 oxidized [2Fe-2S]-[ferredoxin] + NADH. The protein operates within aromatic compound metabolism; anthranilate degradation via hydroxylation; catechol from anthranilate: step 1/1. Its function is as follows. Electron transfer component of anthranilate 1,2-dioxygenase system. This Acinetobacter baylyi (strain ATCC 33305 / BD413 / ADP1) protein is Anthranilate 1,2-dioxygenase electron transfer component.